The sequence spans 549 residues: Glucose-6-phosphate isomerase (549 aa).

The active-site Proton donor is the E355. Residues H387 and K515 contribute to the active site.

It belongs to the GPI family.

The protein resides in the cytoplasm. It carries out the reaction alpha-D-glucose 6-phosphate = beta-D-fructose 6-phosphate. Its pathway is carbohydrate biosynthesis; gluconeogenesis. The protein operates within carbohydrate degradation; glycolysis; D-glyceraldehyde 3-phosphate and glycerone phosphate from D-glucose: step 2/4. In terms of biological role, catalyzes the reversible isomerization of glucose-6-phosphate to fructose-6-phosphate. The polypeptide is Glucose-6-phosphate isomerase (Haemophilus influenzae (strain PittGG)).